Reading from the N-terminus, the 324-residue chain is Tyrosine--tRNA ligase (324 aa).

Position 36 (Tyr36) interacts with L-tyrosine. A 'HIGH' region motif is present at residues 41-49 (PSGKVHLGH). Residues Tyr158, Gln162, Asp165, and Gln180 each coordinate L-tyrosine. The 'KMSKS' region motif lies at 215-219 (KMSSS). Residue Ser218 participates in ATP binding.

The protein belongs to the class-I aminoacyl-tRNA synthetase family. TyrS type 3 subfamily. In terms of assembly, homodimer.

Its subcellular location is the cytoplasm. The catalysed reaction is tRNA(Tyr) + L-tyrosine + ATP = L-tyrosyl-tRNA(Tyr) + AMP + diphosphate + H(+). Its function is as follows. Catalyzes the attachment of tyrosine to tRNA(Tyr) in a two-step reaction: tyrosine is first activated by ATP to form Tyr-AMP and then transferred to the acceptor end of tRNA(Tyr). The sequence is that of Tyrosine--tRNA ligase from Methanopyrus kandleri (strain AV19 / DSM 6324 / JCM 9639 / NBRC 100938).